The sequence spans 191 residues: Small ribosomal subunit protein eS7 (191 aa).

Position 1 is an N-acetylmethionine (Met1).

This sequence belongs to the eukaryotic ribosomal protein eS7 family.

The protein is Small ribosomal subunit protein eS7 (RPS7) of Brassica oleracea (Wild cabbage).